We begin with the raw amino-acid sequence, 658 residues long: Glycogen debranching enzyme (658 aa).

Asp336 functions as the Nucleophile in the catalytic mechanism. The active-site Proton donor is Glu371. A disordered region spans residues 459-484; the sequence is EANGEENRDGTNSNYSDNHGKEGLGG.

The protein belongs to the glycosyl hydrolase 13 family.

It catalyses the reaction Hydrolysis of (1-&gt;6)-alpha-D-glucosidic linkages to branches with degrees of polymerization of three or four glucose residues in limit dextrin.. It functions in the pathway glycan degradation; glycogen degradation. In terms of biological role, removes maltotriose and maltotetraose chains that are attached by 1,6-alpha-linkage to the limit dextrin main chain, generating a debranched limit dextrin. The sequence is that of Glycogen debranching enzyme from Salmonella dublin (strain CT_02021853).